The following is a 178-amino-acid chain: Large ribosomal subunit protein uL5 (178 aa).

Belongs to the universal ribosomal protein uL5 family. Part of the 50S ribosomal subunit; part of the 5S rRNA/L5/L18/L25 subcomplex. Contacts the 5S rRNA and the P site tRNA. Forms a bridge to the 30S subunit in the 70S ribosome.

Functionally, this is one of the proteins that bind and probably mediate the attachment of the 5S RNA into the large ribosomal subunit, where it forms part of the central protuberance. In the 70S ribosome it contacts protein S13 of the 30S subunit (bridge B1b), connecting the 2 subunits; this bridge is implicated in subunit movement. Contacts the P site tRNA; the 5S rRNA and some of its associated proteins might help stabilize positioning of ribosome-bound tRNAs. The chain is Large ribosomal subunit protein uL5 from Prochlorococcus marinus subsp. pastoris (strain CCMP1986 / NIES-2087 / MED4).